The chain runs to 134 residues: Holo-[acyl-carrier-protein] synthase (134 aa).

The Mg(2+) site is built by aspartate 8 and glutamate 57.

This sequence belongs to the P-Pant transferase superfamily. AcpS family. Requires Mg(2+) as cofactor.

The protein localises to the cytoplasm. It carries out the reaction apo-[ACP] + CoA = holo-[ACP] + adenosine 3',5'-bisphosphate + H(+). Transfers the 4'-phosphopantetheine moiety from coenzyme A to a Ser of acyl-carrier-protein. In Rhizobium rhizogenes (strain K84 / ATCC BAA-868) (Agrobacterium radiobacter), this protein is Holo-[acyl-carrier-protein] synthase.